The sequence spans 199 residues: 7-methyl-GTP pyrophosphatase (199 aa).

Residue aspartate 76 is the Proton acceptor of the active site.

The protein belongs to the Maf family. YceF subfamily. A divalent metal cation serves as cofactor.

It localises to the cytoplasm. It carries out the reaction N(7)-methyl-GTP + H2O = N(7)-methyl-GMP + diphosphate + H(+). Its function is as follows. Nucleoside triphosphate pyrophosphatase that hydrolyzes 7-methyl-GTP (m(7)GTP). May have a dual role in cell division arrest and in preventing the incorporation of modified nucleotides into cellular nucleic acids. This Brucella abortus biovar 1 (strain 9-941) protein is 7-methyl-GTP pyrophosphatase.